Here is a 1206-residue protein sequence, read N- to C-terminus: DNA-directed RNA polymerase subunit beta' (1206 aa).

Zn(2+) contacts are provided by Cys-60, Cys-62, Cys-75, and Cys-78. 3 residues coordinate Mg(2+): Asp-449, Asp-451, and Asp-453. Zn(2+) is bound by residues Cys-822, Cys-896, Cys-903, and Cys-906.

Belongs to the RNA polymerase beta' chain family. In terms of assembly, the RNAP catalytic core consists of 2 alpha, 1 beta, 1 beta' and 1 omega subunit. When a sigma factor is associated with the core the holoenzyme is formed, which can initiate transcription. It depends on Mg(2+) as a cofactor. The cofactor is Zn(2+).

It catalyses the reaction RNA(n) + a ribonucleoside 5'-triphosphate = RNA(n+1) + diphosphate. Its function is as follows. DNA-dependent RNA polymerase catalyzes the transcription of DNA into RNA using the four ribonucleoside triphosphates as substrates. This chain is DNA-directed RNA polymerase subunit beta', found in Staphylococcus haemolyticus (strain JCSC1435).